Here is a 424-residue protein sequence, read N- to C-terminus: Poly-cysteine and histidine-tailed protein (424 aa).

The N-terminal stretch at 1 to 17 (MAFSTIVVLFVAAVGFG) is a signal peptide. N291 carries N-linked (GlcNAc...) asparagine glycosylation. Basic and acidic residues predominate over residues 372-390 (VGGKKQQKDQPESEKKAEN). The interval 372 to 424 (VGGKKQQKDQPESEKKAENMPETTGNASHHQHRHHHGDSSSESHEQHHHHHHH) is disordered. A glycan (N-linked (GlcNAc...) asparagine) is linked at N397.

In terms of processing, glycosylated. Expressed in larval tissues like cuticle, hypodermis and muscle (at protein level). Note=Not excreted into striated muscle fibers or nurse cell.

The protein resides in the secreted. Its function is as follows. Binds iron and zinc. May bind nickel. The chain is Poly-cysteine and histidine-tailed protein from Trichinella spiralis (Trichina worm).